A 507-amino-acid polypeptide reads, in one-letter code: ATP synthase subunit alpha, chloroplastic (507 aa).

An ATP-binding site is contributed by 170–177 (GDRQTGKT).

This sequence belongs to the ATPase alpha/beta chains family. In terms of assembly, F-type ATPases have 2 components, CF(1) - the catalytic core - and CF(0) - the membrane proton channel. CF(1) has five subunits: alpha(3), beta(3), gamma(1), delta(1), epsilon(1). CF(0) has four main subunits: a, b, b' and c.

Its subcellular location is the plastid. It is found in the chloroplast thylakoid membrane. It carries out the reaction ATP + H2O + 4 H(+)(in) = ADP + phosphate + 5 H(+)(out). In terms of biological role, produces ATP from ADP in the presence of a proton gradient across the membrane. The alpha chain is a regulatory subunit. In Populus alba (White poplar), this protein is ATP synthase subunit alpha, chloroplastic.